A 1131-amino-acid polypeptide reads, in one-letter code: cGMP-specific 3',5'-cyclic phosphodiesterase (1131 aa).

2 disordered regions span residues 1 to 26 (MTDV…SAAT) and 42 to 150 (GVAP…SQQD). The segment covering 42–63 (GVAPGAVPGPGSAAIPASSSSG) has biased composition (low complexity). Residues 75–86 (SNNNRPAATNRS) are compositionally biased toward polar residues. A compositionally biased stretch (low complexity) spans 110-136 (SSSTPSQSPSPSQSPSQASIQTQTSQQ). GAF domains lie at 255–412 (DIDV…GIGI) and 444–625 (NLEC…GLGI). The PDEase domain occupies 655–978 (SQDQTEKLTQ…RNWQDLAEKV (324 aa)). His-731 (proton donor) is an active-site residue. Residues His-735, His-771, Asp-772, and Asp-882 each coordinate a divalent metal cation. 2 disordered regions span residues 1019–1048 (QQSQ…TGAL) and 1078–1131 (SHVS…CALL). 2 stretches are compositionally biased toward basic and acidic residues: residues 1024–1035 (GSEDSHTPEHQR) and 1078–1088 (SHVSEDMDDKS). Residues 1097 to 1117 (ASGSMGRMSASSSTSSAGGQM) are compositionally biased toward low complexity. Residues 1121 to 1131 (SKKRSKLCALL) are compositionally biased toward basic residues. Position 1128 is a cysteine methyl ester (Cys-1128). Residue Cys-1128 is the site of S-farnesyl cysteine attachment. Positions 1129–1131 (ALL) are cleaved as a propeptide — removed in mature form.

The protein belongs to the cyclic nucleotide phosphodiesterase family. In terms of assembly, interacts with PrBP. A divalent metal cation serves as cofactor.

The protein localises to the cell membrane. The catalysed reaction is 3',5'-cyclic GMP + H2O = GMP + H(+). Has a role regulating cGMP transport in Malpighian tubule principal cells. This is cGMP-specific 3',5'-cyclic phosphodiesterase from Drosophila erecta (Fruit fly).